The primary structure comprises 455 residues: UDP-N-acetylmuramoylalanine--D-glutamate ligase (455 aa).

112–118 (GTNGKTT) lines the ATP pocket.

This sequence belongs to the MurCDEF family.

The protein localises to the cytoplasm. The enzyme catalyses UDP-N-acetyl-alpha-D-muramoyl-L-alanine + D-glutamate + ATP = UDP-N-acetyl-alpha-D-muramoyl-L-alanyl-D-glutamate + ADP + phosphate + H(+). Its pathway is cell wall biogenesis; peptidoglycan biosynthesis. Its function is as follows. Cell wall formation. Catalyzes the addition of glutamate to the nucleotide precursor UDP-N-acetylmuramoyl-L-alanine (UMA). This is UDP-N-acetylmuramoylalanine--D-glutamate ligase from Trichormus variabilis (strain ATCC 29413 / PCC 7937) (Anabaena variabilis).